The primary structure comprises 330 residues: Pre-mRNA-splicing factor 38 (330 aa).

Positions Ser-182 to Tyr-330 are disordered. The span at Leu-184–Ala-199 shows a compositional bias: acidic residues. Residues Arg-213–Ser-224 show a composition bias toward basic residues. Residues Arg-240–Tyr-330 are compositionally biased toward basic and acidic residues.

It belongs to the PRP38 family. In terms of assembly, component of the spliceosome C complex. Interacts with Mfap1 (via C-terminus). Detected in all germal and follicle cells.

It is found in the nucleus. Functionally, required for pre-mRNA splicing. The sequence is that of Pre-mRNA-splicing factor 38 from Drosophila melanogaster (Fruit fly).